The primary structure comprises 148 residues: Endothelial differentiation-related factor 1 (148 aa).

Alanine 2 carries the post-translational modification N-acetylalanine. Serine 4 bears the Phosphoserine mark. Lysine 25 carries the N6-methyllysine modification. The tract at residues 34 to 67 (RGEDVETSKKWAAGQNKQHSITKNTAKLDRETEE) is disordered. Residues 37–113 (DVETSKKWAA…QVIADYESGR (77 aa)) form an interaction with NR5A2, PPARG and NR1H3 region. The segment covering 48 to 58 (QNKQHSITKNT) has biased composition (polar residues). Positions 69–108 (HHDRVTLEVGKVIQRGRQSKGLTQKDLATKINEKPQVIAD) are interaction with TBP and NR5A1. Residues 81-88 (IQRGRQSK) carry the IQ motif motif. Residues 81–135 (IQRGRQSKGLTQKDLATKINEKPQVIADYESGRAIPNNQVLGKIERAIGLKLRGK) form the HTH cro/C1-type domain. Residues 92–111 (QKDLATKINEKPQVIADYES) constitute a DNA-binding region (H-T-H motif).

In terms of assembly, interacts with TBP and the transcription factor IID (TFIID) complex, NR5A2, NR1H3 and PPARG. Interaction with TBP is regulated by phosphorylation. Binds NR5A1, ATF1, FOS and JUN via their conserved basic region. Binding to calmodulin is regulated by calcium and phosphorylation of the IQ motif. Phosphorylated. Expressed in brain, liver, kidney and heart (at protein level). Also expressed in testis.

It localises to the cytoplasm. The protein localises to the nucleus. Transcriptional coactivator stimulating NR5A1 and ligand-dependent NR1H3/LXRA and PPARG transcriptional activities. Enhances the DNA-binding activity of ATF1, ATF2, CREB1 and NR5A1. Regulates nitric oxid synthase activity probably by sequestering calmodulin in the cytoplasm. Might function in endothelial cells differentiation, hormone-induced cardiomyocytes hypertrophy and lipid metabolism. The polypeptide is Endothelial differentiation-related factor 1 (Edf1) (Mus musculus (Mouse)).